The chain runs to 297 residues: 4-diphosphocytidyl-2-C-methyl-D-erythritol kinase (297 aa).

Lys19 is an active-site residue. 105 to 115 is an ATP binding site; sequence PIASGIGGGSA. Residue Asp147 is part of the active site.

The protein belongs to the GHMP kinase family. IspE subfamily.

It carries out the reaction 4-CDP-2-C-methyl-D-erythritol + ATP = 4-CDP-2-C-methyl-D-erythritol 2-phosphate + ADP + H(+). It functions in the pathway isoprenoid biosynthesis; isopentenyl diphosphate biosynthesis via DXP pathway; isopentenyl diphosphate from 1-deoxy-D-xylulose 5-phosphate: step 3/6. In terms of biological role, catalyzes the phosphorylation of the position 2 hydroxy group of 4-diphosphocytidyl-2C-methyl-D-erythritol. This Rhizobium etli (strain CIAT 652) protein is 4-diphosphocytidyl-2-C-methyl-D-erythritol kinase.